We begin with the raw amino-acid sequence, 663 residues long: UvrABC system protein B (663 aa).

The segment covering 1-10 (MIDKRDDKPF) has biased composition (basic and acidic residues). Positions 1–23 (MIDKRDDKPFKLKSKYKPSGDQP) are disordered. In terms of domain architecture, Helicase ATP-binding spans 31-271 (DNIEGGEKAQ…EQSIAKIQAE (241 aa)). 44-51 (GATGTGKT) contacts ATP. Positions 97–120 (YYDYYQPEAYVPSSDTYIEKDSSV) match the Beta-hairpin motif. In terms of domain architecture, Helicase C-terminal spans 435–601 (QMDDLLGEIN…TIKKDIRGLI (167 aa)). A UVR domain is found at 627–662 (KEAINALQKQMQEAAELLDFELAAQMRDLILELKLM).

Belongs to the UvrB family. In terms of assembly, forms a heterotetramer with UvrA during the search for lesions. Interacts with UvrC in an incision complex.

It is found in the cytoplasm. In terms of biological role, the UvrABC repair system catalyzes the recognition and processing of DNA lesions. A damage recognition complex composed of 2 UvrA and 2 UvrB subunits scans DNA for abnormalities. Upon binding of the UvrA(2)B(2) complex to a putative damaged site, the DNA wraps around one UvrB monomer. DNA wrap is dependent on ATP binding by UvrB and probably causes local melting of the DNA helix, facilitating insertion of UvrB beta-hairpin between the DNA strands. Then UvrB probes one DNA strand for the presence of a lesion. If a lesion is found the UvrA subunits dissociate and the UvrB-DNA preincision complex is formed. This complex is subsequently bound by UvrC and the second UvrB is released. If no lesion is found, the DNA wraps around the other UvrB subunit that will check the other stand for damage. The polypeptide is UvrABC system protein B (Streptococcus pyogenes serotype M2 (strain MGAS10270)).